A 238-amino-acid polypeptide reads, in one-letter code: tRNA (guanine-N(1)-)-methyltransferase (238 aa).

S-adenosyl-L-methionine is bound by residues Gly110 and 129–134 (LGDFIL).

This sequence belongs to the RNA methyltransferase TrmD family. As to quaternary structure, homodimer.

The protein resides in the cytoplasm. The enzyme catalyses guanosine(37) in tRNA + S-adenosyl-L-methionine = N(1)-methylguanosine(37) in tRNA + S-adenosyl-L-homocysteine + H(+). Functionally, specifically methylates guanosine-37 in various tRNAs. In Clostridium botulinum (strain Eklund 17B / Type B), this protein is tRNA (guanine-N(1)-)-methyltransferase.